A 203-amino-acid chain; its full sequence is RNA annealing protein YRA2 (203 aa).

M1 is modified (N-acetylmethionine). Disordered regions lie at residues 1 to 60 (MDKA…REEP) and 134 to 203 (EIYQ…YMKG). Residues 11-20 (NSHTDSSSNH) are compositionally biased toward polar residues. Residues 47-60 (SRSKDRLYREREEP) are compositionally biased toward basic and acidic residues. The RRM domain occupies 64 to 138 (KRIRISKIPL…AKIEVEIYQP (75 aa)). 2 stretches are compositionally biased toward basic residues: residues 139–153 (QRKH…RRKQ) and 163–180 (PGSH…KNKG).

It belongs to the YRA1 family. Associates with mRNPs. Interacts with YRA1.

It is found in the nucleus. Involved in export of poly(A) mRNAs from the nucleus. Recruited to the coding sequences as well as poly-A sites of active genes. This is RNA annealing protein YRA2 (YRA2) from Saccharomyces cerevisiae (strain RM11-1a) (Baker's yeast).